The chain runs to 405 residues: uncharacterized protein (405 aa).

Helical transmembrane passes span 19–39 (ILSI…PLAV), 47–67 (VMGF…FATL), 85–105 (IVVF…TAGL), 129–149 (SFAG…LHIG), 157–177 (IVTY…YHWG), 178–198 (GLQA…LLAI), 224–244 (GMAL…ITLF), 252–272 (GAAF…LLFP), 283–303 (VAMI…VATM), 309–329 (IGVL…GVVA), 344–364 (TYTV…GLVM), and 366–386 (WAGV…ALLL).

This sequence belongs to the major facilitator superfamily. YhhS family.

It localises to the cell inner membrane. This is an uncharacterized protein from Escherichia coli O157:H7.